Here is a 100-residue protein sequence, read N- to C-terminus: Small ribosomal subunit protein uS14c (100 aa).

It belongs to the universal ribosomal protein uS14 family. As to quaternary structure, part of the 30S ribosomal subunit.

The protein localises to the plastid. Its subcellular location is the chloroplast. Binds 16S rRNA, required for the assembly of 30S particles. The polypeptide is Small ribosomal subunit protein uS14c (Lepidium virginicum (Virginia pepperweed)).